A 450-amino-acid polypeptide reads, in one-letter code: Glutamate-1-semialdehyde 2,1-aminomutase (450 aa).

N6-(pyridoxal phosphate)lysine is present on K262.

Belongs to the class-III pyridoxal-phosphate-dependent aminotransferase family. HemL subfamily. Homodimer. Pyridoxal 5'-phosphate serves as cofactor.

Its subcellular location is the cytoplasm. It carries out the reaction (S)-4-amino-5-oxopentanoate = 5-aminolevulinate. Its pathway is porphyrin-containing compound metabolism; protoporphyrin-IX biosynthesis; 5-aminolevulinate from L-glutamyl-tRNA(Glu): step 2/2. The sequence is that of Glutamate-1-semialdehyde 2,1-aminomutase from Campylobacter hominis (strain ATCC BAA-381 / DSM 21671 / CCUG 45161 / LMG 19568 / NCTC 13146 / CH001A).